Here is a 209-residue protein sequence, read N- to C-terminus: A-type ATP synthase subunit D (209 aa).

Belongs to the V-ATPase D subunit family. Has multiple subunits with at least A(3), B(3), C, D, E, F, H, I and proteolipid K(x).

It is found in the cell membrane. In terms of biological role, component of the A-type ATP synthase that produces ATP from ADP in the presence of a proton gradient across the membrane. The protein is A-type ATP synthase subunit D of Archaeoglobus fulgidus (strain ATCC 49558 / DSM 4304 / JCM 9628 / NBRC 100126 / VC-16).